Consider the following 328-residue polypeptide: MSILSTRWFSEQEIEENSIIQQFHMNSIVGEVQEAQYIFPHSFTTNNDPSYDDLIEMKPPKILETTYISPSSHLPPNSKPHHIHRHSSSRILSFEDYGSNDMEHEYSPTYLNSIFSPKLEAQVQPHQKSDEFNRKGTKRAQPFSRNQSNAQDHIIAERKRREKLTQRFVALSALVPGLKKMDKASVLGDALKHIKYLQERVGELEEQKKERRLESMVLVKKSKLILDDNNQSFSSSCEDGFSDLDLPEIEVRFSDEDVLIKILCEKQKGHLAKIMAEIEKLHILITNSSVLNFGPTLDITIIAKKESDFDMTLMDVVKSLRSALSNFI.

Positions 125-152 (PHQKSDEFNRKGTKRAQPFSRNQSNAQD) are disordered. A bHLH domain is found at 148–197 (SNAQDHIIAERKRREKLTQRFVALSALVPGLKKMDKASVLGDALKHIKYL).

Homodimer. Expressed in flowers.

It is found in the nucleus. The protein is Transcription factor bHLH25 (BHLH25) of Arabidopsis thaliana (Mouse-ear cress).